Reading from the N-terminus, the 229-residue chain is Isopentenyl-diphosphate delta-isomerase (229 aa).

A substrate-binding site is contributed by Lys-39. Mg(2+)-binding residues include His-43 and His-54. The region spanning 52–202 (LLHRAFSMFI…QYGFTPWFKL (151 aa)) is the Nudix hydrolase domain. Positions 72 and 77 each coordinate substrate. The active site involves Cys-89. Ser-90 contacts substrate. Mg(2+)-binding residues include Glu-152 and Glu-154. The active site involves Glu-154.

Belongs to the IPP isomerase type 1 family. Requires Mg(2+) as cofactor.

It localises to the cytoplasm. It is found in the nucleus. It carries out the reaction isopentenyl diphosphate = dimethylallyl diphosphate. It participates in isoprenoid biosynthesis; dimethylallyl diphosphate biosynthesis; dimethylallyl diphosphate from isopentenyl diphosphate: step 1/1. In terms of biological role, isopentenyl-diphosphate delta-isomerase; part of the second module of ergosterol biosynthesis pathway that includes the middle steps of the pathway. Idi1 catalyzes the 1,3-allylic rearrangement of isopentenyl (IPP) to its highly electrophilic allylic isomer, dimethylallyl diphosphate (DMAPP). The second module is carried out in the vacuole and involves the formation of farnesyl diphosphate, which is also an important intermediate in the biosynthesis of ubiquinone, dolichol, heme and prenylated proteins. Activity by the mevalonate kinase erg12 first converts mevalonate into 5-phosphomevalonate. 5-phosphomevalonate is then further converted to 5-diphosphomevalonate by the phosphomevalonate kinase erg8. The diphosphomevalonate decarboxylase mvd1 then produces isopentenyl diphosphate. The isopentenyl-diphosphate delta-isomerase idi1 then catalyzes the 1,3-allylic rearrangement of the homoallylic substrate isopentenyl (IPP) to its highly electrophilic allylic isomer, dimethylallyl diphosphate (DMAPP). Finally the farnesyl diphosphate synthase fps1 catalyzes the sequential condensation of isopentenyl pyrophosphate with dimethylallyl pyrophosphate, and then with the resultant geranylpyrophosphate to the ultimate product farnesyl pyrophosphate. This Schizosaccharomyces pombe (strain 972 / ATCC 24843) (Fission yeast) protein is Isopentenyl-diphosphate delta-isomerase.